The primary structure comprises 394 residues: Acetate kinase 1 (394 aa).

Asn8 provides a ligand contact to Mg(2+). Lys15 serves as a coordination point for ATP. Arg90 lines the substrate pocket. The Proton donor/acceptor role is filled by Asp147. ATP contacts are provided by residues His207 to Gly211 and Asp282 to Arg284. Glu382 contributes to the Mg(2+) binding site.

It belongs to the acetokinase family. Homodimer. Requires Mg(2+) as cofactor. Mn(2+) is required as a cofactor.

Its subcellular location is the cytoplasm. The enzyme catalyses acetate + ATP = acetyl phosphate + ADP. The protein operates within metabolic intermediate biosynthesis; acetyl-CoA biosynthesis; acetyl-CoA from acetate: step 1/2. Functionally, catalyzes the formation of acetyl phosphate from acetate and ATP. Can also catalyze the reverse reaction. The polypeptide is Acetate kinase 1 (Latilactobacillus sakei subsp. sakei (strain 23K) (Lactobacillus sakei subsp. sakei)).